The chain runs to 238 residues: UDP-2,3-diacylglucosamine hydrolase (238 aa).

Mn(2+)-binding residues include Asp-8, His-10, Asp-41, Asn-78, and His-113. Residue 78-79 (NR) coordinates substrate. 5 residues coordinate substrate: Asp-121, Ser-159, Asn-163, Lys-166, and His-194. Residues His-194 and His-196 each contribute to the Mn(2+) site.

Belongs to the LpxH family. Mn(2+) is required as a cofactor.

It is found in the cell inner membrane. The catalysed reaction is UDP-2-N,3-O-bis[(3R)-3-hydroxytetradecanoyl]-alpha-D-glucosamine + H2O = 2-N,3-O-bis[(3R)-3-hydroxytetradecanoyl]-alpha-D-glucosaminyl 1-phosphate + UMP + 2 H(+). The protein operates within glycolipid biosynthesis; lipid IV(A) biosynthesis; lipid IV(A) from (3R)-3-hydroxytetradecanoyl-[acyl-carrier-protein] and UDP-N-acetyl-alpha-D-glucosamine: step 4/6. Functionally, hydrolyzes the pyrophosphate bond of UDP-2,3-diacylglucosamine to yield 2,3-diacylglucosamine 1-phosphate (lipid X) and UMP by catalyzing the attack of water at the alpha-P atom. Involved in the biosynthesis of lipid A, a phosphorylated glycolipid that anchors the lipopolysaccharide to the outer membrane of the cell. This chain is UDP-2,3-diacylglucosamine hydrolase, found in Shewanella halifaxensis (strain HAW-EB4).